The sequence spans 1024 residues: Beta-galactosidase (1024 aa).

Asn-103 and Asp-202 together coordinate substrate. Residue Asp-202 participates in Na(+) binding. 3 residues coordinate Mg(2+): Glu-417, His-419, and Glu-462. Residues Glu-462 and 538–541 (EYAH) each bind substrate. Catalysis depends on Glu-462, which acts as the Proton donor. The active-site Nucleophile is Glu-538. Mg(2+) is bound at residue Asn-598. Residues Phe-602 and Asn-605 each coordinate Na(+). 2 residues coordinate substrate: Asn-605 and Trp-1000.

This sequence belongs to the glycosyl hydrolase 2 family. In terms of assembly, homotetramer. The cofactor is Mg(2+). Requires Mn(2+) as cofactor. Na(+) serves as cofactor.

The catalysed reaction is Hydrolysis of terminal non-reducing beta-D-galactose residues in beta-D-galactosides.. Its activity is regulated as follows. Inhibited by phenylethyl thio-beta-D-galactoside (PETG), isopropyl thio-beta-D-galactoside (IPTG), L-ribose, D-galactonolactone, lactose and 2-amino-D-galactose. This is Beta-galactosidase (lacZ) from Escherichia coli (strain K12).